The chain runs to 131 residues: MRHRKSGRQLNRNSSHRQAMFRNMASSLVRHEIIKTTVAKAKELRRVVEPLITLAKSDSVANRRLAFARTRDAEVVGKLFTELGPRYQERPGGYTRILKCGLRAGDKAPMAYIELVGRPEAAQAVEVEAAE.

The protein belongs to the bacterial ribosomal protein bL17 family. In terms of assembly, part of the 50S ribosomal subunit. Contacts protein L32.

The sequence is that of Large ribosomal subunit protein bL17 from Shewanella sp. (strain ANA-3).